The following is a 124-amino-acid chain: Ribonuclease P protein component (124 aa).

The protein belongs to the RnpA family. Consists of a catalytic RNA component (M1 or rnpB) and a protein subunit.

It carries out the reaction Endonucleolytic cleavage of RNA, removing 5'-extranucleotides from tRNA precursor.. Its function is as follows. RNaseP catalyzes the removal of the 5'-leader sequence from pre-tRNA to produce the mature 5'-terminus. It can also cleave other RNA substrates such as 4.5S RNA. The protein component plays an auxiliary but essential role in vivo by binding to the 5'-leader sequence and broadening the substrate specificity of the ribozyme. This chain is Ribonuclease P protein component, found in Synechocystis sp. (strain ATCC 27184 / PCC 6803 / Kazusa).